Reading from the N-terminus, the 181-residue chain is MLLVGRIGKSVGLNGGLKLHLESDFPECLKKGVKVSVAPINAFSCASSFKDYVIHSYEHAKNLLFLETIRTPEKAKELTNLGLFMSEAESKKLCVLKEGEFFYCDLIGLSVVEGNEILGKVIEIQRISQTDYFMVETTRSLVEKGLAKIFLIPYRDFYIQEILLQDKKITTHNAKTLLENS.

Residues 98–177 (EGEFFYCDLI…KITTHNAKTL (80 aa)) form the PRC barrel domain.

Belongs to the RimM family. In terms of assembly, binds ribosomal protein uS19.

The protein resides in the cytoplasm. In terms of biological role, an accessory protein needed during the final step in the assembly of 30S ribosomal subunit, possibly for assembly of the head region. Essential for efficient processing of 16S rRNA. May be needed both before and after RbfA during the maturation of 16S rRNA. It has affinity for free ribosomal 30S subunits but not for 70S ribosomes. This chain is Ribosome maturation factor RimM, found in Helicobacter pylori (strain J99 / ATCC 700824) (Campylobacter pylori J99).